Reading from the N-terminus, the 408-residue chain is 3-ketoacyl-CoA thiolase B, peroxisomal (408 aa).

C112 acts as the Acyl-thioester intermediate in catalysis. Catalysis depends on proton acceptor residues H366 and C394.

Belongs to the thiolase-like superfamily. Thiolase family. As to quaternary structure, homodimer.

It is found in the peroxisome. It carries out the reaction an acyl-CoA + acetyl-CoA = a 3-oxoacyl-CoA + CoA. The protein operates within lipid metabolism; fatty acid metabolism. The polypeptide is 3-ketoacyl-CoA thiolase B, peroxisomal (Candida tropicalis (Yeast)).